The primary structure comprises 904 residues: Copper-transporting ATPase ccc2 (904 aa).

At Met-1–Arg-172 the chain is on the cytoplasmic side. Residues Tyr-2–Ser-68 enclose the HMA domain. Residues Cys-13 and Cys-16 each coordinate Cu(+). Residues Phe-173–Cys-193 traverse the membrane as a helical segment. The Lumenal, vesicle segment spans residues Asp-194–Arg-197. Residues Ala-198 to Leu-218 traverse the membrane as a helical segment. Over Ser-219–Asp-246 the chain is Cytoplasmic. A helical membrane pass occupies residues Val-247–Tyr-267. Over Ser-268 to Ile-278 the chain is Lumenal, vesicle. A helical transmembrane segment spans residues Phe-279 to Leu-296. The Cytoplasmic portion of the chain corresponds to Glu-297–Ala-431. Residues Gly-432 to Phe-452 traverse the membrane as a helical segment. The Lumenal, vesicle portion of the chain corresponds to Thr-453–Lys-469. Residues Phe-470 to Gly-490 form a helical membrane-spanning segment. Topologically, residues Leu-491–Cys-805 are cytoplasmic. Asp-529 functions as the 4-aspartylphosphate intermediate in the catalytic mechanism. Residues Asp-742 and Asp-746 each contribute to the Mg(2+) site. Residues Ile-806–Leu-826 traverse the membrane as a helical segment. Over Asn-827–Pro-828 the chain is Lumenal, vesicle. The chain crosses the membrane as a helical span at residues Met-829 to Leu-849. Over Arg-850 to Val-904 the chain is Cytoplasmic.

The protein belongs to the cation transport ATPase (P-type) (TC 3.A.3) family. Type IB subfamily.

It is found in the golgi apparatus. The protein resides in the trans-Golgi network membrane. It catalyses the reaction Cu(+)(in) + ATP + H2O = Cu(+)(out) + ADP + phosphate + H(+). Probably involved in copper transport and in the regulation of cellular copper level. Retrieves copper from the metallochaperone atx1 and incorporates it into trans-Golgi vesicles. This Schizosaccharomyces pombe (strain 972 / ATCC 24843) (Fission yeast) protein is Copper-transporting ATPase ccc2 (ccc2).